A 350-amino-acid polypeptide reads, in one-letter code: Uroporphyrinogen decarboxylase (350 aa).

Substrate contacts are provided by residues 27 to 31 (RQAGR), Phe46, Asp76, Tyr152, Ser207, and His321.

Belongs to the uroporphyrinogen decarboxylase family. As to quaternary structure, homodimer.

The protein localises to the cytoplasm. It catalyses the reaction uroporphyrinogen III + 4 H(+) = coproporphyrinogen III + 4 CO2. The protein operates within porphyrin-containing compound metabolism; protoporphyrin-IX biosynthesis; coproporphyrinogen-III from 5-aminolevulinate: step 4/4. Catalyzes the decarboxylation of four acetate groups of uroporphyrinogen-III to yield coproporphyrinogen-III. This is Uroporphyrinogen decarboxylase from Listeria innocua serovar 6a (strain ATCC BAA-680 / CLIP 11262).